Here is a 284-residue protein sequence, read N- to C-terminus: Acetylglutamate kinase (284 aa).

Substrate is bound by residues 64–65 (GG), Arg-86, and Asn-181.

It belongs to the acetylglutamate kinase family. ArgB subfamily.

Its subcellular location is the cytoplasm. It catalyses the reaction N-acetyl-L-glutamate + ATP = N-acetyl-L-glutamyl 5-phosphate + ADP. It functions in the pathway amino-acid biosynthesis; L-arginine biosynthesis; N(2)-acetyl-L-ornithine from L-glutamate: step 2/4. Catalyzes the ATP-dependent phosphorylation of N-acetyl-L-glutamate. The sequence is that of Acetylglutamate kinase from Nitratiruptor sp. (strain SB155-2).